A 115-amino-acid polypeptide reads, in one-letter code: Xenovulene A biosynthesis cluster protein asL2 (115 aa).

Functionally, part of the gene cluster that mediates the biosynthesis of xenovulene A, an unusual meroterpenoid that has potent inhibitory effects on the human gamma-aminobutyrate A (GABAA) benzodiazepine receptor. The first step of xenovulene A biosynthesis is the biosynthesis of 3-methylorcinaldehyde performed by the non-reducing polyketide synthase aspks1. The salicylate hydroxylase asL1 then catalyzes the oxidative dearomatization of 3-methylorcinaldehyde to yield a dearomatized hydroxycyclohexadione. The 2-oxoglutarate-dependent dioxygenase asL3 further catalyzes the oxidative ring expansion to provide the first tropolone metabolite. The cytochrome P450 monooxygenase asR2 allows the synthesis of tropolone hemiacetal. In parallel, a previously unrecognised class of terpene cyclase, asR6, produces alpha-humulene from farnesylpyrophosphate (FPP). The putative Diels-Alderase asR5 probably catalyzes the formation of the tropolone-humulene skeleton by linking humulene and the polyketide moiety. Oxidative-ring contractions catalyzed by asL4 and asL6 then processively remove carbon atoms from the polyketide to yield xenovulene A. The sequence is that of Xenovulene A biosynthesis cluster protein asL2 from Sarocladium schorii (Acremonium strictum (strain IMI 501407)).